The chain runs to 101 residues: Putative regulatory protein Csac_2087 (101 aa).

Belongs to the RemA family.

The chain is Putative regulatory protein Csac_2087 from Caldicellulosiruptor saccharolyticus (strain ATCC 43494 / DSM 8903 / Tp8T 6331).